A 139-amino-acid polypeptide reads, in one-letter code: Non-structural protein 1 (139 aa).

The DLNP; interaction with MAP1B motif lies at 136–139; it reads DLNP.

The protein belongs to the pneumovirus non-structural protein 1 family. As to quaternary structure, monomer. Homomultimer. Heteromultimer with NS2. Interacts with the matrix protein M. Interacts with host ELOC and CUL2; this interaction allows NS1 to form an active E3 ligase with ELOC and CUL2. Interacts with host IRF3; this interaction leads to the disrupted association of IRF3 with CREBBP and thus reduced binding of IRF3 to the IFN-beta promoter. Interacts with host MAVS; this interaction prevents MAVS binding to RIGI and inhibits signaling pathway leading to interferon production. Interacts with host MAP1B/microtubule-associated protein 1B. Interacts with host TRIM25 (via SPRY domain); this interaction suppresses RIGI ubiquitination and results in decreased interaction between RIGI and MAVS.

Its subcellular location is the host cytoplasm. The protein resides in the host mitochondrion. The protein localises to the host nucleus. Functionally, plays a major role in antagonizing the type I IFN-mediated antiviral response by degrading or inhibiting multiple cellular factors required for either IFN induction or response pathways. Acts cooperatively with NS2 to repress activation and nuclear translocation of host IFN-regulatory factor IRF3. Also disrupts the association of IRF3 with CREBBP. Interacts with host mitochondrial-associated membrane (MAM) MAVS and prevents the interaction with RIGI. Interacts with TRIM25 to suppress TRIM25-mediated RIGI ubiquitination and thereby RIGI-MAVS interaction. Together with NS2, participates in the proteasomal degradation of host STAT2, IRF3, IRF7, TBK1 and RIGI through a NS-degradasome involving CUL2 and Elongin-C. The degradasome requires an intact mitochondrial MAVS. Decreases the levels of host TRAF3 and IKBKE/IKK-epsilon. As functions other than disruptions of the type I IFN-mediated antiviral signaling pathways, induces host SOCS1 and SOCS3 expression. Suppresses premature apoptosis by an NF-kappa-B-dependent, interferon-independent mechanism and thus facilitates virus growth. Additionally, NS1 may serve some inhibitory role in viral transcription and RNA replication. Suppresses proliferation and activation of host CD103+ CD8+ cytotoxic T-lymphocytes and Th17 helper T-lymphocytes. The sequence is that of Non-structural protein 1 (1C) from Homo sapiens (Human).